We begin with the raw amino-acid sequence, 510 residues long: Proline--tRNA ligase (510 aa).

It belongs to the class-II aminoacyl-tRNA synthetase family. ProS type 3 subfamily. Homodimer.

Its subcellular location is the cytoplasm. The catalysed reaction is tRNA(Pro) + L-proline + ATP = L-prolyl-tRNA(Pro) + AMP + diphosphate. Catalyzes the attachment of proline to tRNA(Pro) in a two-step reaction: proline is first activated by ATP to form Pro-AMP and then transferred to the acceptor end of tRNA(Pro). The chain is Proline--tRNA ligase from Sphingomonas elodea.